The following is a 276-amino-acid chain: D-aminoacyl-tRNA deacylase (276 aa).

The protein belongs to the DtdA deacylase family. Monomer. It depends on Zn(2+) as a cofactor.

The catalysed reaction is a D-aminoacyl-tRNA + H2O = a tRNA + a D-alpha-amino acid + H(+). It catalyses the reaction glycyl-tRNA(Ala) + H2O = tRNA(Ala) + glycine + H(+). Its function is as follows. D-aminoacyl-tRNA deacylase with broad substrate specificity. By recycling D-aminoacyl-tRNA to D-amino acids and free tRNA molecules, this enzyme counteracts the toxicity associated with the formation of D-aminoacyl-tRNA entities in vivo. The sequence is that of D-aminoacyl-tRNA deacylase from Korarchaeum cryptofilum (strain OPF8).